The following is a 209-amino-acid chain: Ribosomal RNA large subunit methyltransferase E (209 aa).

5 residues coordinate S-adenosyl-L-methionine: Gly63, Trp65, Asp83, Asp99, and Asp124. Lys164 (proton acceptor) is an active-site residue.

This sequence belongs to the class I-like SAM-binding methyltransferase superfamily. RNA methyltransferase RlmE family.

It is found in the cytoplasm. The catalysed reaction is uridine(2552) in 23S rRNA + S-adenosyl-L-methionine = 2'-O-methyluridine(2552) in 23S rRNA + S-adenosyl-L-homocysteine + H(+). Functionally, specifically methylates the uridine in position 2552 of 23S rRNA at the 2'-O position of the ribose in the fully assembled 50S ribosomal subunit. The sequence is that of Ribosomal RNA large subunit methyltransferase E from Cronobacter sakazakii (strain ATCC BAA-894) (Enterobacter sakazakii).